Consider the following 314-residue polypeptide: Nitrilase 2 (314 aa).

The CN hydrolase domain occupies 7-269 (VTLGVAQAAP…ETLITARVST (263 aa)). The active-site Proton acceptor is the Glu-47. The active-site Proton donor is Lys-132. The active-site Nucleophile is the Cys-166.

It belongs to the carbon-nitrogen hydrolase superfamily. Nitrilase family.

The enzyme catalyses a nitrile + 2 H2O = a carboxylate + NH4(+). Functionally, nitrilases catalyze the mild hydrolytic conversion of organonitriles directly to the corresponding carboxylic acids. Catalyzes the production of aryllactic acid derivatives. Mediates the hydrolysis of cyanohydrin to (S)-phenyllactic acid. This Unknown prokaryotic organism protein is Nitrilase 2.